The primary structure comprises 409 residues: TM2 domain-containing protein ZK858.5 (409 aa).

The TM2 domain maps to 8–55 (VKPWIVRIILIVGGLFGAHRLYLKQVPEAFVFFSTLGVLLIGWLYDSF). The next 6 helical transmembrane spans lie at 10-30 (PWIVRIILIVGGLFGAHRLYL), 37-57 (FVFFSTLGVLLIGWLYDSFMF), 104-124 (VLYGSYIGLATWLACTVTFGW), 127-147 (INLIPFICVVALGITAGIYII), 168-190 (MFIMVRLAQTTVFRAIFLTAIVS), and 209-229 (HFLFWSSLFLMLVCVILLGCS).

The protein belongs to the TM2 family.

The protein resides in the membrane. The protein is TM2 domain-containing protein ZK858.5 of Caenorhabditis elegans.